We begin with the raw amino-acid sequence, 427 residues long: MAP kinase-interacting serine/threonine-protein kinase 1 (427 aa).

Residues methionine 1 to isoleucine 11 show a composition bias toward basic and acidic residues. Residues methionine 1–threonine 37 form a disordered region. Threonine 34 carries the phosphothreonine; by PAK2 modification. A Phosphoserine; by PAK2 modification is found at serine 39. One can recognise a Protein kinase domain in the interval glutamine 49 to valine 333. ATP contacts are provided by residues leucine 55–valine 63 and lysine 78. Catalysis depends on aspartate 170, which acts as the Proton acceptor. Serine 180 and serine 185 each carry phosphoserine. Phosphothreonine is present on residues threonine 209, threonine 214, and threonine 344. Residues arginine 407 to leucine 427 form a disordered region.

This sequence belongs to the protein kinase superfamily. CAMK Ser/Thr protein kinase family. As to quaternary structure, interacts with the C-terminal regions of EIF4G1 and EIF4G2. Also binds to dephosphorylated ERK1 and ERK2, and to the p38 kinases. The cofactor is Mg(2+). In terms of processing, dual phosphorylation of Thr-209 and Thr-214 activates the kinase. Phosphorylation of Thr-344 activates the kinase. MAPK3/ERK1 is one of the kinases which activate MKNK1/MNK1. Phosphorylation by PAK2 leads to a reduced phosphorylation of EIF4G1. In terms of tissue distribution, ubiquitously expressed in all tissues examined, with high levels in skeletal muscle.

The catalysed reaction is L-seryl-[protein] + ATP = O-phospho-L-seryl-[protein] + ADP + H(+). The enzyme catalyses L-threonyl-[protein] + ATP = O-phospho-L-threonyl-[protein] + ADP + H(+). Phosphorylated and activated by the p38 kinases and kinases in the Erk pathway. May play a role in the response to environmental stress and cytokines. Appears to regulate translation by phosphorylating EIF4E, thus increasing the affinity of this protein for the 7-methylguanosine-containing mRNA cap. The chain is MAP kinase-interacting serine/threonine-protein kinase 1 (Mknk1) from Mus musculus (Mouse).